The primary structure comprises 63 residues: U2-agatoxin-Ao1v (63 aa).

Residues 1-14 (LLLISAMVGSMIAA) form the signal peptide. Positions 15–28 (VPEEESLQLSEDER) are excised as a propeptide. 3 disulfides stabilise this stretch: C31–C47, C38–C52, and C46–C62.

Belongs to the neurotoxin 01 (U2-agtx) family. As to expression, expressed by the venom gland.

It is found in the secreted. Functionally, insect active toxin causing rapid but reversible paralysis in crickets. No activity shown in mammals. Does not show effect on mammalian voltage-gated calcium channels. This Agelena orientalis (Funnel-web spider) protein is U2-agatoxin-Ao1v.